Here is a 736-residue protein sequence, read N- to C-terminus: Elongation factor 2 (736 aa).

The region spanning Glu18–Arg261 is the tr-type G domain. GTP is bound by residues Ala27–Thr34, Asp93–His97, and Asn147–Asp150. His602 bears the Diphthamide mark.

It belongs to the TRAFAC class translation factor GTPase superfamily. Classic translation factor GTPase family. EF-G/EF-2 subfamily.

It localises to the cytoplasm. Functionally, catalyzes the GTP-dependent ribosomal translocation step during translation elongation. During this step, the ribosome changes from the pre-translocational (PRE) to the post-translocational (POST) state as the newly formed A-site-bound peptidyl-tRNA and P-site-bound deacylated tRNA move to the P and E sites, respectively. Catalyzes the coordinated movement of the two tRNA molecules, the mRNA and conformational changes in the ribosome. The protein is Elongation factor 2 of Desulfurococcus amylolyticus (strain DSM 18924 / JCM 16383 / VKM B-2413 / 1221n) (Desulfurococcus kamchatkensis).